Consider the following 218-residue polypeptide: Adenylate kinase (218 aa).

ATP is bound at residue 12 to 17 (GAGKGT). An NMP region spans residues 32–61 (STGDIFRKNISENTPLGIEAKSYMDNGQLV). Residues Thr-33, Arg-38, 59–61 (QLV), 87–90 (GFPR), and Gln-94 contribute to the AMP site. The tract at residues 128–165 (GRRVCPSCGASYHIKFNPPTNDGKCDLCGSDVIQRKDD) is LID. Arg-129 is an ATP binding site. Zn(2+) contacts are provided by Cys-132 and Cys-135. 138-139 (SY) is a binding site for ATP. Cys-152 and Cys-155 together coordinate Zn(2+). The AMP site is built by Arg-162 and Arg-173. Gln-201 serves as a coordination point for ATP.

The protein belongs to the adenylate kinase family. As to quaternary structure, monomer.

The protein resides in the cytoplasm. The enzyme catalyses AMP + ATP = 2 ADP. Its pathway is purine metabolism; AMP biosynthesis via salvage pathway; AMP from ADP: step 1/1. Its function is as follows. Catalyzes the reversible transfer of the terminal phosphate group between ATP and AMP. Plays an important role in cellular energy homeostasis and in adenine nucleotide metabolism. The chain is Adenylate kinase from Clostridium perfringens (strain 13 / Type A).